The following is a 1406-amino-acid chain: DNA-directed RNA polymerase subunit beta' (1406 aa).

4 residues coordinate Zn(2+): cysteine 70, cysteine 72, cysteine 85, and cysteine 88. Residues aspartate 460, aspartate 462, and aspartate 464 each contribute to the Mg(2+) site. 4 residues coordinate Zn(2+): cysteine 814, cysteine 888, cysteine 895, and cysteine 898.

It belongs to the RNA polymerase beta' chain family. In terms of assembly, the RNAP catalytic core consists of 2 alpha, 1 beta, 1 beta' and 1 omega subunit. When a sigma factor is associated with the core the holoenzyme is formed, which can initiate transcription. Requires Mg(2+) as cofactor. Zn(2+) serves as cofactor.

It catalyses the reaction RNA(n) + a ribonucleoside 5'-triphosphate = RNA(n+1) + diphosphate. Functionally, DNA-dependent RNA polymerase catalyzes the transcription of DNA into RNA using the four ribonucleoside triphosphates as substrates. This Sodalis glossinidius (strain morsitans) protein is DNA-directed RNA polymerase subunit beta'.